A 1663-amino-acid chain; its full sequence is Cortactin-binding protein 2 (1663 aa).

5 disordered regions span residues 1-23 (MATDGASCEPDLSRAPEDAAGAA), 203-222 (KKKTNELEEELSTEKRRSTE), 352-440 (ARPG…LHPG), 454-478 (GNANDPDQNGNTTQSPPSRDVSPTS), and 498-616 (RFTS…PKPS). Residues 119–276 (KKMQERMSAQ…EQLKRGSDSK (158 aa)) are a coiled coil. Residues 384-396 (NGPSTGSTPDPTS) show a composition bias toward low complexity. The span at 411 to 422 (QTPGIAPQNSQA) shows a compositional bias: polar residues. Arg498 is modified (asymmetric dimethylarginine). Polar residues predominate over residues 583-593 (TVASPPSSLPQ). 5 ANK repeats span residues 709-739 (GRPTLLQQAAAQGNVTLLSMLLNEEGLDINY), 743-772 (DGHSALYSAAKNGHTDCVRLLLSAEAQVNA), 776-805 (NGFTPLCAAAAQGHFECVELLIAYDANINH), 809-838 (GGQTPLYLACKNGNKECIKLLLEAGTNRSV), and 842-871 (DGWTPVHAAVDTGNVDSLKLLMYHRILARG). The interval 876–897 (EEGSESSVFDLDGGEESPEGIS) is disordered. Residues 912 to 942 (EGWTAAHIAASKGFKNCLEILCRHGGLEPER) form an ANK 6 repeat. Residues 1446–1485 (NKKKGESGAWRKVNTSPRRKSGRFSLPTWNKPDLSTEGMK) are disordered. A Phosphoserine modification is found at Ser1524. 2 disordered regions span residues 1580–1602 (SQKEVSPLSSHQTTECSNSKSKT) and 1615–1663 (VPRS…KPNK). Polar residues predominate over residues 1582–1599 (KEVSPLSSHQTTECSNSK). Low complexity predominate over residues 1624-1638 (SQNTKRSSSSSNTRQ). Residues 1645–1663 (SKEENWNLHKNEHLEKPNK) are compositionally biased toward basic and acidic residues.

In terms of assembly, interacts with CTTN/cortactin SH3 domain. Interacts with STRN, STRN4/zinedin and MOB4/phocein; this interactions mediate the association with the STRIPAK core complex and may regulate dendritic spine distribution of the STRIPAK complex in hippocampal neurons. Activation of glutamate receptors weakens the interaction with STRN and STRN4.

The protein resides in the cytoplasm. Its subcellular location is the cell cortex. It localises to the cell projection. It is found in the dendritic spine. Regulates the dendritic spine distribution of CTTN/cortactin in hippocampal neurons, and thus controls dendritic spinogenesis and dendritic spine maintenance. Associates with the striatin-interacting phosphatase and kinase (STRIPAK) core complex to regulate dendritic spine distribution of the STRIPAK complex in hippocampal neurons. This Nomascus leucogenys (Northern white-cheeked gibbon) protein is Cortactin-binding protein 2 (CTTNBP2).